The following is a 202-amino-acid chain: ER membrane protein complex subunit 7 homolog (202 aa).

The N-terminal stretch at Met-1–Thr-23 is a signal peptide. A helical membrane pass occupies residues Ile-148–Pro-168. The tract at residues Met-179 to Arg-202 is disordered. Positions Ala-182–Arg-202 are enriched in polar residues.

The protein belongs to the EMC7 family.

The protein localises to the membrane. This chain is ER membrane protein complex subunit 7 homolog, found in Arabidopsis thaliana (Mouse-ear cress).